Here is a 331-residue protein sequence, read N- to C-terminus: Glycerol-3-phosphate dehydrogenase [NAD(P)+] (331 aa).

Residues S10, W11, R31, R32, and K105 each contribute to the NADPH site. Sn-glycerol 3-phosphate contacts are provided by K105 and G135. A139 lines the NADPH pocket. Sn-glycerol 3-phosphate is bound by residues K190, D243, S253, R254, and N255. Residue K190 is the Proton acceptor of the active site. R254 is an NADPH binding site. NADPH-binding residues include V279 and E281.

The protein belongs to the NAD-dependent glycerol-3-phosphate dehydrogenase family.

It is found in the cytoplasm. The enzyme catalyses sn-glycerol 3-phosphate + NAD(+) = dihydroxyacetone phosphate + NADH + H(+). The catalysed reaction is sn-glycerol 3-phosphate + NADP(+) = dihydroxyacetone phosphate + NADPH + H(+). It functions in the pathway membrane lipid metabolism; glycerophospholipid metabolism. Its function is as follows. Catalyzes the reduction of the glycolytic intermediate dihydroxyacetone phosphate (DHAP) to sn-glycerol 3-phosphate (G3P), the key precursor for phospholipid synthesis. In Corynebacterium diphtheriae (strain ATCC 700971 / NCTC 13129 / Biotype gravis), this protein is Glycerol-3-phosphate dehydrogenase [NAD(P)+].